The sequence spans 54 residues: Large ribosomal subunit protein bL33 (54 aa).

This sequence belongs to the bacterial ribosomal protein bL33 family.

This chain is Large ribosomal subunit protein bL33, found in Stenotrophomonas maltophilia (strain R551-3).